The sequence spans 557 residues: Proline--tRNA ligase (557 aa).

Belongs to the class-II aminoacyl-tRNA synthetase family. ProS type 1 subfamily. Homodimer.

The protein resides in the cytoplasm. The catalysed reaction is tRNA(Pro) + L-proline + ATP = L-prolyl-tRNA(Pro) + AMP + diphosphate. In terms of biological role, catalyzes the attachment of proline to tRNA(Pro) in a two-step reaction: proline is first activated by ATP to form Pro-AMP and then transferred to the acceptor end of tRNA(Pro). As ProRS can inadvertently accommodate and process non-cognate amino acids such as alanine and cysteine, to avoid such errors it has two additional distinct editing activities against alanine. One activity is designated as 'pretransfer' editing and involves the tRNA(Pro)-independent hydrolysis of activated Ala-AMP. The other activity is designated 'posttransfer' editing and involves deacylation of mischarged Ala-tRNA(Pro). The misacylated Cys-tRNA(Pro) is not edited by ProRS. The polypeptide is Proline--tRNA ligase (Baumannia cicadellinicola subsp. Homalodisca coagulata).